Consider the following 341-residue polypeptide: UPF0284 protein Ta0078 (341 aa).

This sequence belongs to the UPF0284 family.

The protein is UPF0284 protein Ta0078 of Thermoplasma acidophilum (strain ATCC 25905 / DSM 1728 / JCM 9062 / NBRC 15155 / AMRC-C165).